A 144-amino-acid polypeptide reads, in one-letter code: Large ribosomal subunit protein uL16 (144 aa).

Belongs to the universal ribosomal protein uL16 family. As to quaternary structure, part of the 50S ribosomal subunit.

Functionally, binds 23S rRNA and is also seen to make contacts with the A and possibly P site tRNAs. The polypeptide is Large ribosomal subunit protein uL16 (Enterococcus faecalis (strain ATCC 700802 / V583)).